The chain runs to 289 residues: Acetyl-coenzyme A carboxylase carboxyl transferase subunit beta (289 aa).

The CoA carboxyltransferase N-terminal domain maps to 28–289 (VMTKCPKCKK…QGGEMAVWQS (262 aa)). Zn(2+) is bound by residues C32, C35, C51, and C54. The C4-type zinc-finger motif lies at 32–54 (CPKCKKIMYTKELLKNLKVCVNC).

Belongs to the AccD/PCCB family. In terms of assembly, acetyl-CoA carboxylase is a heterohexamer composed of biotin carboxyl carrier protein (AccB), biotin carboxylase (AccC) and two subunits each of ACCase subunit alpha (AccA) and ACCase subunit beta (AccD). Zn(2+) is required as a cofactor.

Its subcellular location is the cytoplasm. The enzyme catalyses N(6)-carboxybiotinyl-L-lysyl-[protein] + acetyl-CoA = N(6)-biotinyl-L-lysyl-[protein] + malonyl-CoA. Its pathway is lipid metabolism; malonyl-CoA biosynthesis; malonyl-CoA from acetyl-CoA: step 1/1. Its function is as follows. Component of the acetyl coenzyme A carboxylase (ACC) complex. Biotin carboxylase (BC) catalyzes the carboxylation of biotin on its carrier protein (BCCP) and then the CO(2) group is transferred by the transcarboxylase to acetyl-CoA to form malonyl-CoA. In Bacillus cereus (strain AH187), this protein is Acetyl-coenzyme A carboxylase carboxyl transferase subunit beta.